The primary structure comprises 294 residues: MFRGVGTAIVTPFKNGELDLEAYERLVRYQLDGGVSALIVLGTTGEAPTVNDDERERLVSKTLEIVDGKIPVIVGAGTNSTEKTLKLVKQAEKLGADGVLIVTPYYNKPTQEGLYQHYKYISERTDLKIIVYNVPGRTGVNVLPETAARIASDLKNVVGIKEANGDIDQIDRTVTLTKSARSDFMVWSGNDDRTFYLLCAGGDGVISVVSNVAPKQMSDLCAEFFSGNIEKAREIHRKLRPLMKALFVETNPIPVKAALSLMGYVENELRLPLVPASEKTVELLKGVLRESGLL.

Thr44 contributes to the pyruvate binding site. Tyr132 acts as the Proton donor/acceptor in catalysis. The active-site Schiff-base intermediate with substrate is Lys161. Ile206 lines the pyruvate pocket.

The protein belongs to the DapA family. Homotetramer; dimer of dimers.

The protein resides in the cytoplasm. It catalyses the reaction L-aspartate 4-semialdehyde + pyruvate = (2S,4S)-4-hydroxy-2,3,4,5-tetrahydrodipicolinate + H2O + H(+). The protein operates within amino-acid biosynthesis; L-lysine biosynthesis via DAP pathway; (S)-tetrahydrodipicolinate from L-aspartate: step 3/4. Functionally, catalyzes the condensation of (S)-aspartate-beta-semialdehyde [(S)-ASA] and pyruvate to 4-hydroxy-tetrahydrodipicolinate (HTPA). In Thermotoga neapolitana (strain ATCC 49049 / DSM 4359 / NBRC 107923 / NS-E), this protein is 4-hydroxy-tetrahydrodipicolinate synthase.